Consider the following 461-residue polypeptide: MSIGKIVKVIGAVVDVEFEQGKGPKVYDALKINDGSDGSLMLEVQQQLGGGVVRCIAMGSSDGLKRGLEVESTGNPITVPVGEETLGRIMNVLGHPIDECGPIGEQVSYEIHRDAPSYEEQSNSTALLETGVKVIDLICPFAKGGKIGLFGGAGVGKTVNMMELINNIAKAHSGLSVFTGVGERTREGNDFYYEMKEAGVLDKVAMVYGQMNEPPGNRLRVALTGLTIAERFRDEGRDVLLFVDNIYRYTLAGTEVSALLGRMPSAVGYQPTLAEEMGVLQERITSTKNGSITSIQAVYVPADDLTDPSPATTFAHLDATVVLSRNIAALGLYPAIDPLDSTSRQLDPQVVGQEHYDVARKVQQTLQRYKELKDIIAILGMDELSEEDKRLVSRARKVERFLTQPYHVAEVFTGQPGVFVPLKDTIAGFKALLDGQYDDIPEQAFMYCGNIDEVLEKAKKL.

151–158 (GGAGVGKT) contacts ATP.

It belongs to the ATPase alpha/beta chains family. F-type ATPases have 2 components, CF(1) - the catalytic core - and CF(0) - the membrane proton channel. CF(1) has five subunits: alpha(3), beta(3), gamma(1), delta(1), epsilon(1). CF(0) has three main subunits: a(1), b(2) and c(9-12). The alpha and beta chains form an alternating ring which encloses part of the gamma chain. CF(1) is attached to CF(0) by a central stalk formed by the gamma and epsilon chains, while a peripheral stalk is formed by the delta and b chains.

It is found in the cell inner membrane. It catalyses the reaction ATP + H2O + 4 H(+)(in) = ADP + phosphate + 5 H(+)(out). Produces ATP from ADP in the presence of a proton gradient across the membrane. The catalytic sites are hosted primarily by the beta subunits. The polypeptide is ATP synthase subunit beta 2 (Vibrio campbellii (strain ATCC BAA-1116)).